The chain runs to 414 residues: Histidine--tRNA ligase (414 aa).

It belongs to the class-II aminoacyl-tRNA synthetase family. In terms of assembly, homodimer.

Its subcellular location is the cytoplasm. The enzyme catalyses tRNA(His) + L-histidine + ATP = L-histidyl-tRNA(His) + AMP + diphosphate + H(+). This Mycoplasma capricolum subsp. capricolum (strain California kid / ATCC 27343 / NCTC 10154) protein is Histidine--tRNA ligase.